The chain runs to 366 residues: Glycine betaine monooxygenase reductase subunit (366 aa).

Positions 16–119 constitute an FAD-binding FR-type domain; sequence NGRHLVRCVK…HGPVGLFNAI (104 aa). The 2Fe-2S ferredoxin-type domain maps to 282–366; the sequence is HQVEFTATGK…VPKGDVVIDY (85 aa). [2Fe-2S] cluster contacts are provided by Cys-316, Cys-321, Cys-324, and Cys-354.

The protein in the N-terminal section; belongs to the FAD-binding oxidoreductase type 6 family. The system is composed of an oxygenase subunit (GbcA) and a reductase subunit (GbcB). FAD is required as a cofactor. The cofactor is [2Fe-2S] cluster.

The enzyme catalyses glycine betaine + NADH + O2 + H(+) = N,N-dimethylglycine + formaldehyde + NAD(+) + H2O. Functionally, involved in degradation of glycine betaine. Part of a Rieske-type oxygenase system that catalyzes the conversion of glycine betaine (GB) to dimethylglycine (DMG). This subunit is the ferredoxin reductase component of the system. Required for growth on choline and GB, but not for growth on DMG. In Pseudomonas aeruginosa (strain ATCC 15692 / DSM 22644 / CIP 104116 / JCM 14847 / LMG 12228 / 1C / PRS 101 / PAO1), this protein is Glycine betaine monooxygenase reductase subunit.